The chain runs to 453 residues: Bis(5'-adenosyl)-triphosphatase ENPP4 (453 aa).

Residues 1–15 form the signal peptide; that stretch reads MKLLVILLFSGLITG. The Extracellular segment spans residues 16-407; the sequence is FRSDSSSSLP…DQWCINLPEA (392 aa). Positions 34 and 70 each coordinate Zn(2+). The AMP-threonine intermediate role is filled by Thr-70. Substrate is bound by residues Asn-91 and Tyr-154. N-linked (GlcNAc...) asparagine glycans are attached at residues Asn-155 and Asn-166. Residues Asp-189, His-193, Asp-237, and His-238 each contribute to the Zn(2+) site. Asp-189 serves as a coordination point for substrate. Cys-254 and Cys-287 form a disulfide bridge. N-linked (GlcNAc...) asparagine glycosylation is present at Asn-276. His-336 is a Zn(2+) binding site. An N-linked (GlcNAc...) asparagine glycan is attached at Asn-386. Cys-394 and Cys-401 are joined by a disulfide. A helical membrane pass occupies residues 408–428; it reads IAIVIGSLLVLTMLTCLIIIM. At 429–453 the chain is on the cytoplasmic side; sequence QNRLSVPRPFSRLQLQEDDDDPLIG.

This sequence belongs to the nucleotide pyrophosphatase/phosphodiesterase family. It depends on Zn(2+) as a cofactor. As to expression, expressed on the surface of vascular endothelia.

The protein localises to the cell membrane. The enzyme catalyses P(1),P(3)-bis(5'-adenosyl) triphosphate + H2O = AMP + ADP + 2 H(+). Hydrolyzes extracellular Ap3A into AMP and ADP, and Ap4A into AMP and ATP. Ap3A and Ap4A are diadenosine polyphosphates thought to induce proliferation of vascular smooth muscle cells. Acts as a procoagulant, mediating platelet aggregation at the site of nascent thrombus via release of ADP from Ap3A and activation of ADP receptors. This chain is Bis(5'-adenosyl)-triphosphatase ENPP4 (ENPP4), found in Homo sapiens (Human).